An 874-amino-acid chain; its full sequence is Alanine--tRNA ligase (874 aa).

His-562, His-566, Cys-664, and His-668 together coordinate Zn(2+).

The protein belongs to the class-II aminoacyl-tRNA synthetase family. The cofactor is Zn(2+).

It is found in the cytoplasm. It catalyses the reaction tRNA(Ala) + L-alanine + ATP = L-alanyl-tRNA(Ala) + AMP + diphosphate. Catalyzes the attachment of alanine to tRNA(Ala) in a two-step reaction: alanine is first activated by ATP to form Ala-AMP and then transferred to the acceptor end of tRNA(Ala). Also edits incorrectly charged Ser-tRNA(Ala) and Gly-tRNA(Ala) via its editing domain. The sequence is that of Alanine--tRNA ligase from Neisseria gonorrhoeae (strain ATCC 700825 / FA 1090).